A 374-amino-acid chain; its full sequence is MGVKGLNQLIKEHAPEAFREFQLKNLFGRKVAIDASMCLYQYLIAVRQSDGQQLTSEDGETTSHLSGMFYRTIRLVENGIKPMYVFDGKPPVLKGGELEKRMIRKKEALKQQEDIKDTATVEEMVRYEKRSVRVTKEQNNEAKKLLELMGIPYVDAPCEAEAQCAELAVAGKVFAAASEDMDTLCYSPPYLLRHLTFAEARKMPIDQIDYKKAMEGLEMDKQTFIDLCILLGCDYCETIKGVGPVTAFKLIKEHGSLDNIVKWIEENPDSTKFKVPENWPYAEARELFLNPDVSPGKEINLKWQEPKVDELVEFMVKQKGFSEDRVRSGAEKLKKGLKGGVQGRLDGFFSVVKTEKRKPEQDKKTKGSKKAKKK.

The N-domain stretch occupies residues 1–105; sequence MGVKGLNQLI…GELEKRMIRK (105 aa). Asp34 serves as a coordination point for Mg(2+). DNA is bound by residues Arg47 and Arg71. 5 residues coordinate Mg(2+): Asp87, Glu159, Glu161, Asp180, and Asp182. Residues 123-254 are I-domain; that stretch reads EMVRYEKRSV…VTAFKLIKEH (132 aa). A DNA-binding site is contributed by Glu159. DNA contacts are provided by Gly232 and Asp234. Asp234 is a Mg(2+) binding site. Residues 341 to 349 form an interaction with PCNA region; sequence VQGRLDGFF. Over residues 354 to 365 the composition is skewed to basic and acidic residues; the sequence is TEKRKPEQDKKT. The segment at 354–374 is disordered; sequence TEKRKPEQDKKTKGSKKAKKK.

This sequence belongs to the XPG/RAD2 endonuclease family. FEN1 subfamily. Interacts with PCNA. Three molecules of FEN1 bind to one PCNA trimer with each molecule binding to one PCNA monomer. PCNA stimulates the nuclease activity without altering cleavage specificity. Requires Mg(2+) as cofactor. In terms of processing, phosphorylated. Phosphorylation upon DNA damage induces relocalization to the nuclear plasma.

It localises to the nucleus. The protein resides in the nucleolus. It is found in the nucleoplasm. Its subcellular location is the mitochondrion. Functionally, structure-specific nuclease with 5'-flap endonuclease and 5'-3' exonuclease activities involved in DNA replication and repair. During DNA replication, cleaves the 5'-overhanging flap structure that is generated by displacement synthesis when DNA polymerase encounters the 5'-end of a downstream Okazaki fragment. It enters the flap from the 5'-end and then tracks to cleave the flap base, leaving a nick for ligation. Also involved in the long patch base excision repair (LP-BER) pathway, by cleaving within the apurinic/apyrimidinic (AP) site-terminated flap. Acts as a genome stabilization factor that prevents flaps from equilibrating into structures that lead to duplications and deletions. Also possesses 5'-3' exonuclease activity on nicked or gapped double-stranded DNA, and exhibits RNase H activity. Also involved in replication and repair of rDNA and in repairing mitochondrial DNA. The chain is Flap endonuclease 1 from Meyerozyma guilliermondii (strain ATCC 6260 / CBS 566 / DSM 6381 / JCM 1539 / NBRC 10279 / NRRL Y-324) (Yeast).